We begin with the raw amino-acid sequence, 741 residues long: Zinc metalloproteinase nas-30 (741 aa).

2 stretches are compositionally biased toward low complexity: residues K71–P85 and P97–P118. Positions K71–Q122 are disordered. In terms of domain architecture, Peptidase M12A spans K324–N516. Intrachain disulfides connect C364–C515, C385–C404, C519–C539, C541–C550, C562–C583, and C610–C630. Zn(2+) is bound at residue H412. E413 is a catalytic residue. Residues H416 and H422 each contribute to the Zn(2+) site. Residues C539–C550 form the EGF-like domain. Positions C550–L648 constitute a CUB domain. N633 is a glycosylation site (N-linked (GlcNAc...) asparagine).

Zn(2+) is required as a cofactor.

Metalloprotease. This is Zinc metalloproteinase nas-30 from Caenorhabditis elegans.